The sequence spans 448 residues: Putative RNA-ligase (448 aa).

The protein belongs to the asfivirus M448R family.

The protein localises to the virion. This chain is Putative RNA-ligase, found in Ornithodoros (relapsing fever ticks).